We begin with the raw amino-acid sequence, 600 residues long: Zinc metalloproteinase-disintegrin-like stejnihagin-A (600 aa).

Positions 1–20 (MIEVLLVTICLAVFPYQGSS) are cleaved as a signal peptide. A propeptide spanning residues 21-191 (IILESGNVND…KASQLVVTAE (171 aa)) is cleaved from the precursor. Glutamine 192 carries the post-translational modification Pyrrolidone carboxylic acid. Positions 198 to 389 (RYVKLAIVAD…YNPQCILNAP (192 aa)) constitute a Peptidase M12B domain. 3 disulfide bridges follow: cysteine 306/cysteine 384, cysteine 346/cysteine 368, and cysteine 348/cysteine 351. N-linked (GlcNAc...) asparagine glycosylation occurs at asparagine 317. Histidine 331 is a Zn(2+) binding site. The active site involves glutamate 332. The Zn(2+) site is built by histidine 335 and histidine 341. An N-linked (GlcNAc...) asparagine glycan is attached at asparagine 367. The 87-residue stretch at 397–483 (PPVCGNELLE…DCPTDDFHRN (87 aa)) folds into the Disintegrin domain. Ca(2+) contacts are provided by valine 399, asparagine 402, leucine 404, glutamate 406, glutamate 409, and aspartate 412. Cystine bridges form between cysteine 400-cysteine 429, cysteine 411-cysteine 424, cysteine 413-cysteine 419, cysteine 423-cysteine 446, cysteine 437-cysteine 443, cysteine 442-cysteine 468, cysteine 455-cysteine 475, cysteine 462-cysteine 494, cysteine 487-cysteine 499, cysteine 506-cysteine 556, cysteine 521-cysteine 565, cysteine 534-cysteine 544, cysteine 551-cysteine 587, and cysteine 581-cysteine 593. Residues 461 to 463 (ECD) carry the D/ECD-tripeptide motif. Residue asparagine 568 is glycosylated (N-linked (GlcNAc...) asparagine).

The protein belongs to the venom metalloproteinase (M12B) family. P-III subfamily. P-IIIa sub-subfamily. In terms of assembly, monomer. Requires Zn(2+) as cofactor. Expressed by the venom gland.

Its subcellular location is the secreted. This metalloproteinase-disintegrin-like impairs hemostasis in the envenomed animal. In Trimeresurus stejnegeri (Chinese green tree viper), this protein is Zinc metalloproteinase-disintegrin-like stejnihagin-A.